The primary structure comprises 239 residues: Small ribosomal subunit protein uS2 (239 aa).

The protein belongs to the universal ribosomal protein uS2 family.

In Francisella philomiragia subsp. philomiragia (strain ATCC 25017 / CCUG 19701 / FSC 153 / O#319-036), this protein is Small ribosomal subunit protein uS2.